Reading from the N-terminus, the 412-residue chain is 5,5'-dehydrodivanillate O-demethylase ferredoxin reductase subunit (412 aa).

Residues Ala14, Lys49, Val82, Arg130, Asp279, and Val298 each coordinate FAD.

The protein belongs to the FAD-dependent oxidoreductase family. As to quaternary structure, monomer. The three-component monooxygenase is composed of an oxygenase (LigXa), a ferredoxin (LigXc) and a ferredoxin reductase (LigXd). FAD is required as a cofactor.

It catalyses the reaction 5,5'-dehydrodivanillate + NADH + O2 + H(+) = 2,2',3-trihydroxy-3'-methoxy-5,5'-dicarboxybiphenyl + formaldehyde + NAD(+) + H2O. In terms of biological role, involved in the catabolism of 5,5'-dehydrodivanillate (DDVA), an intermediate in the biodegradation of lignin. Part of a three-component monooxygenase that catalyzes the O-demethylation of DDVA, leading to the formation of 2,2',3-trihydroxy-3'-methoxy-5,5'-dicarboxybiphenyl (OH-DDVA). LigXd probably transfers the electrons from NADH to LigXc. The sequence is that of 5,5'-dehydrodivanillate O-demethylase ferredoxin reductase subunit from Sphingobium sp. (strain NBRC 103272 / SYK-6).